The following is a 592-amino-acid chain: N-acetyltransferase ESCO2 (592 aa).

A phosphoserine mark is found at S41 and S85. The segment at 267 to 294 (KSSVKVQNARSKNEEKLRKNPSGAVVSS) is disordered. S309 is modified (phosphoserine). The CCHH-type zinc finger occupies 384 to 408 (TVCKSCGMIYTASNPEDEIQHLQHH).

The protein belongs to the acetyltransferase family. ECO subfamily.

The protein resides in the nucleus. Its subcellular location is the chromosome. The enzyme catalyses L-lysyl-[protein] + acetyl-CoA = N(6)-acetyl-L-lysyl-[protein] + CoA + H(+). Functionally, acetyltransferase required for the establishment of sister chromatid cohesion. Couples the processes of cohesion and DNA replication to ensure that only sister chromatids become paired together. In contrast to the structural cohesins, the deposition and establishment factors are required only during the S phase. Acetylates the cohesin component SMC3. In Mus musculus (Mouse), this protein is N-acetyltransferase ESCO2 (Esco2).